The primary structure comprises 324 residues: Polyphosphate glucokinase (324 aa).

The interval 53-79 (TSTDATADTPRTSPPSDTAGTTSRHRG) is disordered. The segment covering 62-74 (PRTSPPSDTAGTT) has biased composition (polar residues). Position 83–88 (83–88 (DIGGSS)) interacts with ATP.

Belongs to the ROK (NagC/XylR) family. Homodimer.

The catalysed reaction is [phosphate](n) + D-glucose = [phosphate](n-1) + D-glucose 6-phosphate + H(+). The enzyme catalyses D-glucose + ATP = D-glucose 6-phosphate + ADP + H(+). Its function is as follows. Catalyzes the phosphorylation of glucose using polyphosphate or ATP as the phosphoryl donor. This is Polyphosphate glucokinase (ppgK) from Mycobacterium leprae (strain TN).